The following is a 153-amino-acid chain: Large ribosomal subunit protein uL15 (153 aa).

The protein belongs to the universal ribosomal protein uL15 family. As to quaternary structure, part of the 50S ribosomal subunit.

Its function is as follows. Binds to the 23S rRNA. This Pelagibacter ubique (strain HTCC1062) protein is Large ribosomal subunit protein uL15.